A 320-amino-acid polypeptide reads, in one-letter code: Protein phosphatase PTC7 homolog fig (320 aa).

One can recognise a PPM-type phosphatase domain in the interval 49-315 (PYLVTAVQGR…DDITLILASV (267 aa)). Mn(2+) is bound by residues D93, G94, and D238.

This sequence belongs to the PP2C family. It depends on Mg(2+) as a cofactor. Mn(2+) is required as a cofactor.

The enzyme catalyses O-phospho-L-seryl-[protein] + H2O = L-seryl-[protein] + phosphate. It catalyses the reaction O-phospho-L-threonyl-[protein] + H2O = L-threonyl-[protein] + phosphate. The chain is Protein phosphatase PTC7 homolog fig from Drosophila yakuba (Fruit fly).